A 384-amino-acid chain; its full sequence is Sphingosine 1-phosphate receptor 4 (384 aa).

The Extracellular segment spans residues 1–50 (MNATGTPVAPESCQQLAAGGHSRLIVLHYNHSGRLAGRGGPEDGGLGALR). 2 N-linked (GlcNAc...) asparagine glycosylation sites follow: Asn2 and Asn30. A helical transmembrane segment spans residues 51–71 (GLSVAASCLVVLENLLVLAAI). Residues 72–84 (TSHMRSRRWVYYC) lie on the Cytoplasmic side of the membrane. Residues 85–105 (LVNITLSDLLTGAAYLANVLL) traverse the membrane as a helical segment. Residues 106 to 117 (SGARTFRLAPAQ) are Extracellular-facing. A helical membrane pass occupies residues 118 to 138 (WFLREGLLFTALAASTFSLLF). Over 139-161 (TAGERFATMVRPVAESGATKTSR) the chain is Cytoplasmic. A helical membrane pass occupies residues 162-182 (VYGFIGLCWLLAALLGMLPLL). Over 183-206 (GWNCLCAFDRCSSLLPLYSKRYIL) the chain is Extracellular. A helical transmembrane segment spans residues 207 to 227 (FCLVIFAGVLATIMGLYGAIF). Residues 228-252 (RLVQASGQKAPRPAARRKARRLLKT) lie on the Cytoplasmic side of the membrane. The helical transmembrane segment at 253–273 (VLMILLAFLVCWGPLFGLLLA) threads the bilayer. Residues 274-288 (DVFGSNLWAQEYLRG) lie on the Extracellular side of the membrane. A helical transmembrane segment spans residues 289-309 (MDWILALAVLNSAVNPIIYSF). At 310 to 384 (RSREVCRAVL…LSSISSVRSI (75 aa)) the chain is on the cytoplasmic side. The S-palmitoyl cysteine moiety is linked to residue Cys323.

It belongs to the G-protein coupled receptor 1 family. As to expression, specifically expressed in fetal and adult lymphoid and hematopoietic tissue as well as in lung. Considerable level of expression in adult and fetal spleen as well as adult peripheral leukocytes and lung. Lower expression in adult thymus, lymph node, bone marrow, and appendix as well as in fetal liver, thymus, and lung.

It is found in the cell membrane. In terms of biological role, receptor for the lysosphingolipid sphingosine 1-phosphate (S1P). S1P is a bioactive lysophospholipid that elicits diverse physiological effect on most types of cells and tissues. May be involved in cell migration processes that are specific for lymphocytes. This is Sphingosine 1-phosphate receptor 4 (S1PR4) from Homo sapiens (Human).